Reading from the N-terminus, the 94-residue chain is Co-chaperonin GroES (94 aa).

The protein belongs to the GroES chaperonin family. As to quaternary structure, heptamer of 7 subunits arranged in a ring. Interacts with the chaperonin GroEL.

It localises to the cytoplasm. In terms of biological role, together with the chaperonin GroEL, plays an essential role in assisting protein folding. The GroEL-GroES system forms a nano-cage that allows encapsulation of the non-native substrate proteins and provides a physical environment optimized to promote and accelerate protein folding. GroES binds to the apical surface of the GroEL ring, thereby capping the opening of the GroEL channel. The sequence is that of Co-chaperonin GroES from Bacillus cereus (strain ZK / E33L).